A 528-amino-acid polypeptide reads, in one-letter code: MKQYALHKELVQKAVEGADGYSIILGIVSCGEGLRLLVAMNCLWPGAGSIQTLLCGLPSLPPCPESRDILRALFQSIGAADCMPDMAQRHHTFLHKLTLISIYESSNLKYDEVKQALRKARQDVVEDVPLPVFKVILFPQLSFLRDALSVHCDLFTVVTVLLESLVDTAPDGWHLDAAEADCSTNAFNFDSGEVKEDRLWGEMRTLITKFSEAQHQLDYLSLIDLKAILRLIREHKETLIHTMMAVSVTNPLSQQCIPSLTDSKWLQHAHFIEGLVTLLAPFESMLTAPNACAFDVYAHLDRLRSILRDARDMLPCAVPDFLSMDRKCARALHSDNIAPEEAHFYFTILSIYIDEIDSILDCYSPYVSGFKLCTFTLGTVTLSEITSSLSSLPCKLTNLAQIAEEYYFIYQSEQIADCLSTLQSVNRCEDVYEHWKTLVTFWSRLLREYSLASRLMLLLLTAFSTPAIFLASKTVISSALSAQRSCLTEANSEAALLLHLKHGFIVKTLFKFILKQPIGGGLLRDGAE.

This is an uncharacterized protein from Giardia intestinalis (Giardia lamblia).